A 627-amino-acid polypeptide reads, in one-letter code: DNA mismatch repair protein MutL (627 aa).

This sequence belongs to the DNA mismatch repair MutL/HexB family.

Functionally, this protein is involved in the repair of mismatches in DNA. It is required for dam-dependent methyl-directed DNA mismatch repair. May act as a 'molecular matchmaker', a protein that promotes the formation of a stable complex between two or more DNA-binding proteins in an ATP-dependent manner without itself being part of a final effector complex. This Mesorhizobium japonicum (strain LMG 29417 / CECT 9101 / MAFF 303099) (Mesorhizobium loti (strain MAFF 303099)) protein is DNA mismatch repair protein MutL.